The sequence spans 873 residues: Nitrate reductase [NADPH] (873 aa).

The disordered stretch occupies residues 30–61 (TELDTADIPLPPPSKEPTEVLSLDKTTPDSHV). Cys150 lines the Mo-molybdopterin pocket. Residues 512–587 (TRIIDLEEFK…MPDYHIGTLD (76 aa)) form the Cytochrome b5 heme-binding domain. The heme site is built by His547 and His570. The FAD-binding FR-type domain maps to 616-729 (KAWTKATLTK…KGPTGRFEYL (114 aa)). FAD contacts are provided by residues 672-675 (RSYT), 689-693 (LIKIY), 703-705 (KMT), and Thr756. 843–852 (MVLVCGPEAM) contributes to the NADP(+) binding site.

The protein belongs to the nitrate reductase family. In terms of assembly, homodimer. FAD serves as cofactor. Requires heme as cofactor. It depends on Mo-molybdopterin as a cofactor.

The enzyme catalyses nitrite + NADP(+) + H2O = nitrate + NADPH + H(+). Nitrate reductase is a key enzyme involved in the first step of nitrate assimilation in plants, fungi and bacteria. The protein is Nitrate reductase [NADPH] (niaD) of Emericella nidulans (strain FGSC A4 / ATCC 38163 / CBS 112.46 / NRRL 194 / M139) (Aspergillus nidulans).